Here is a 130-residue protein sequence, read N- to C-terminus: Small ribosomal subunit protein uS11 (130 aa).

Belongs to the universal ribosomal protein uS11 family. Part of the 30S ribosomal subunit. Interacts with proteins S7 and S18. Binds to IF-3.

Functionally, located on the platform of the 30S subunit, it bridges several disparate RNA helices of the 16S rRNA. Forms part of the Shine-Dalgarno cleft in the 70S ribosome. In Prochlorococcus marinus (strain MIT 9211), this protein is Small ribosomal subunit protein uS11.